Consider the following 270-residue polypeptide: NAD kinase (270 aa).

The active-site Proton acceptor is the D61. NAD(+) contacts are provided by residues 61 to 62 (DG), 133 to 134 (NE), R144, R163, D165, and 176 to 181 (TAYNLS).

Belongs to the NAD kinase family. A divalent metal cation serves as cofactor.

It is found in the cytoplasm. The enzyme catalyses NAD(+) + ATP = ADP + NADP(+) + H(+). In terms of biological role, involved in the regulation of the intracellular balance of NAD and NADP, and is a key enzyme in the biosynthesis of NADP. Catalyzes specifically the phosphorylation on 2'-hydroxyl of the adenosine moiety of NAD to yield NADP. This Natronomonas pharaonis (strain ATCC 35678 / DSM 2160 / CIP 103997 / JCM 8858 / NBRC 14720 / NCIMB 2260 / Gabara) (Halobacterium pharaonis) protein is NAD kinase.